An 89-amino-acid polypeptide reads, in one-letter code: Small ribosomal subunit protein uS15 (89 aa).

This sequence belongs to the universal ribosomal protein uS15 family. As to quaternary structure, part of the 30S ribosomal subunit. Forms a bridge to the 50S subunit in the 70S ribosome, contacting the 23S rRNA.

One of the primary rRNA binding proteins, it binds directly to 16S rRNA where it helps nucleate assembly of the platform of the 30S subunit by binding and bridging several RNA helices of the 16S rRNA. In terms of biological role, forms an intersubunit bridge (bridge B4) with the 23S rRNA of the 50S subunit in the ribosome. This is Small ribosomal subunit protein uS15 from Nitratiruptor sp. (strain SB155-2).